The primary structure comprises 257 residues: 5'-nucleotidase SurE (257 aa).

Aspartate 8, aspartate 9, serine 40, and asparagine 92 together coordinate a divalent metal cation.

The protein belongs to the SurE nucleotidase family. It depends on a divalent metal cation as a cofactor.

Its subcellular location is the cytoplasm. The enzyme catalyses a ribonucleoside 5'-phosphate + H2O = a ribonucleoside + phosphate. Nucleotidase that shows phosphatase activity on nucleoside 5'-monophosphates. This Rhizobium leguminosarum bv. trifolii (strain WSM2304) protein is 5'-nucleotidase SurE.